We begin with the raw amino-acid sequence, 275 residues long: Large ribosomal subunit protein uL2 (275 aa).

Residues 210 to 275 are disordered; it reads GRNRHRGIRP…DKLIISRKKK (66 aa). The span at 257–275 shows a compositional bias: basic residues; sequence FKTRKKKASDKLIISRKKK.

Belongs to the universal ribosomal protein uL2 family. As to quaternary structure, part of the 50S ribosomal subunit. Forms a bridge to the 30S subunit in the 70S ribosome.

In terms of biological role, one of the primary rRNA binding proteins. Required for association of the 30S and 50S subunits to form the 70S ribosome, for tRNA binding and peptide bond formation. It has been suggested to have peptidyltransferase activity; this is somewhat controversial. Makes several contacts with the 16S rRNA in the 70S ribosome. The chain is Large ribosomal subunit protein uL2 from Helicobacter hepaticus (strain ATCC 51449 / 3B1).